We begin with the raw amino-acid sequence, 371 residues long: Histidinol-phosphate aminotransferase (371 aa).

The residue at position 222 (lysine 222) is an N6-(pyridoxal phosphate)lysine.

The protein belongs to the class-II pyridoxal-phosphate-dependent aminotransferase family. Histidinol-phosphate aminotransferase subfamily. As to quaternary structure, homodimer. Pyridoxal 5'-phosphate is required as a cofactor.

The enzyme catalyses L-histidinol phosphate + 2-oxoglutarate = 3-(imidazol-4-yl)-2-oxopropyl phosphate + L-glutamate. The protein operates within amino-acid biosynthesis; L-histidine biosynthesis; L-histidine from 5-phospho-alpha-D-ribose 1-diphosphate: step 7/9. This Anoxybacillus flavithermus (strain DSM 21510 / WK1) protein is Histidinol-phosphate aminotransferase.